The chain runs to 193 residues: Chromophore lyase CpcS/CpeS 4 (193 aa).

This sequence belongs to the CpcS/CpeS biliprotein lyase family.

Covalently attaches a chromophore to Cys residue(s) of phycobiliproteins. The sequence is that of Chromophore lyase CpcS/CpeS 4 from Trichodesmium erythraeum (strain IMS101).